A 790-amino-acid polypeptide reads, in one-letter code: MELSEGELSHTSSSSSFVPVDQRQLQDAIQIIDEDKHFNTGILDYINKTSPADVGNNYHIISVFGSQSTGKSTLLNRLFNTNFDVMDESNRQQTTKGIWLAYSPVVSTTSGHTTSKSNILVMDVEGTDGRERGEDQDFERKAALFALSTSEILIINIWETQVGLYQGANMGLLKTVFEVNLSLFGKSKLEKHNEHKVLLLIVIRDHVGVTPVESLAKTFTSDLQNMWGSLSKPAELEHLRFADFFDVSFHALNHKVLQPKEFGEGINKLGDRLVVNNELFKPEYHHDVPIDGWTMYAERCWEQIETNKDLDLPTQQILVAQFKCDEIVEGVFQEFLSKYQHHFKEVDVDVDFAELGELFVDLRSDSLEDYDVSASRYNKAVYEQKRAKLRGLINDKLKEVFDVHAKKLCDTLLETFQKDLVALKGKDFAVNVKALSTKLVEQVVDTLSLMSLHGDISSNEITSGLSKEIDATIAKQQVIELNSIVNKSVKKLSGSLSKSIQFELGDPNDETWDNVLQMFKESYDKFGGDFGLGTSTTQNEQAIERFKFKSWCQFYDVTRKLISKEKLLALLQDRFDDKFRYDENGLPKLYLNEQDLEKTFAVAKQYALQVLPILTLAKLADGSEIVPEYDIFDSKLREEFLGAYDDSDDEDDHCFAEVVTEQEKSEVLAKFKKEVDAKYIETKRSIVQHITQIPYYIYLIILVLGWNEFMAIIRNPLFFSLSIVLGATVYVLYYLNLLKPAMLVAQRTMDEVIIMAKTKLREVLIDDHEVTGRQLNKIAGGKENIELDDM.

Residues 1–692 (MELSEGELSH…KRSIVQHITQ (692 aa)) lie on the Cytoplasmic side of the membrane. Residues 55–284 (GNNYHIISVF…VNNELFKPEY (230 aa)) enclose the GB1/RHD3-type G domain. Residue 65-72 (GSQSTGKS) coordinates GTP. The chain crosses the membrane as a helical span at residues 693-713 (IPYYIYLIILVLGWNEFMAII). The Lumenal segment spans residues 714–716 (RNP). A helical transmembrane segment spans residues 717-737 (LFFSLSIVLGATVYVLYYLNL). At 738-790 (LKPAMLVAQRTMDEVIIMAKTKLREVLIDDHEVTGRQLNKIAGGKENIELDDM) the chain is on the cytoplasmic side.

It belongs to the TRAFAC class dynamin-like GTPase superfamily. GB1/RHD3 GTPase family. RHD3 subfamily.

The protein resides in the endoplasmic reticulum membrane. Its function is as follows. Cooperates with the reticulon proteins and tubule-shaping DP1 family proteins to generate and maintain the structure of the tubular endoplasmic reticulum network. Has GTPase activity, which is required for its function in ER organization. The sequence is that of Protein SEY1 from Candida dubliniensis (strain CD36 / ATCC MYA-646 / CBS 7987 / NCPF 3949 / NRRL Y-17841) (Yeast).